The chain runs to 140 residues: Large-conductance mechanosensitive channel (140 aa).

The next 2 membrane-spanning stretches (helical) occupy residues 9-29 and 86-106; these read AFAL…GAAF and GSFL…FLMV.

Belongs to the MscL family. In terms of assembly, homopentamer.

The protein resides in the cell inner membrane. Its function is as follows. Channel that opens in response to stretch forces in the membrane lipid bilayer. May participate in the regulation of osmotic pressure changes within the cell. The polypeptide is Large-conductance mechanosensitive channel (Anaeromyxobacter dehalogenans (strain 2CP-1 / ATCC BAA-258)).